The primary structure comprises 297 residues: Formamidopyrimidine-DNA glycosylase (297 aa).

Catalysis depends on proline 2, which acts as the Schiff-base intermediate with DNA. Catalysis depends on glutamate 3, which acts as the Proton donor. Lysine 61 (proton donor; for beta-elimination activity) is an active-site residue. Residues arginine 120 and arginine 176 each coordinate DNA. Residues 262–296 (HVYGRQGQPCDRCGTAIVRESFMNRGSHFCPRCQR) form an FPG-type zinc finger. Arginine 286 (proton donor; for delta-elimination activity) is an active-site residue.

This sequence belongs to the FPG family. In terms of assembly, monomer. It depends on Zn(2+) as a cofactor.

It carries out the reaction Hydrolysis of DNA containing ring-opened 7-methylguanine residues, releasing 2,6-diamino-4-hydroxy-5-(N-methyl)formamidopyrimidine.. It catalyses the reaction 2'-deoxyribonucleotide-(2'-deoxyribose 5'-phosphate)-2'-deoxyribonucleotide-DNA = a 3'-end 2'-deoxyribonucleotide-(2,3-dehydro-2,3-deoxyribose 5'-phosphate)-DNA + a 5'-end 5'-phospho-2'-deoxyribonucleoside-DNA + H(+). Functionally, involved in base excision repair of DNA damaged by oxidation or by mutagenic agents. Acts as a DNA glycosylase that recognizes and removes damaged bases. Has a preference for oxidized purines, such as 7,8-dihydro-8-oxoguanine (8-oxoG). Has AP (apurinic/apyrimidinic) lyase activity and introduces nicks in the DNA strand. Cleaves the DNA backbone by beta-delta elimination to generate a single-strand break at the site of the removed base with both 3'- and 5'-phosphates. The chain is Formamidopyrimidine-DNA glycosylase from Leifsonia xyli subsp. xyli (strain CTCB07).